Reading from the N-terminus, the 214-residue chain is Somatotropin-A (214 aa).

The signal sequence occupies residues 1–25 (MATGFCSSFGLLVVLLLKNVADVGA). 2 disulfides stabilise this stretch: Cys77/Cys187 and Cys204/Cys212.

This sequence belongs to the somatotropin/prolactin family.

It localises to the secreted. Functionally, growth hormone plays an important role in growth control. This chain is Somatotropin-A (gh-a), found in Xenopus laevis (African clawed frog).